We begin with the raw amino-acid sequence, 384 residues long: DNA replication and repair protein RecF (384 aa).

Residue G30 to T37 coordinates ATP.

This sequence belongs to the RecF family.

The protein localises to the cytoplasm. Its function is as follows. The RecF protein is involved in DNA metabolism; it is required for DNA replication and normal SOS inducibility. RecF binds preferentially to single-stranded, linear DNA. It also seems to bind ATP. The protein is DNA replication and repair protein RecF of Levilactobacillus brevis (strain ATCC 367 / BCRC 12310 / CIP 105137 / JCM 1170 / LMG 11437 / NCIMB 947 / NCTC 947) (Lactobacillus brevis).